The primary structure comprises 86 residues: Small ribosomal subunit protein uS17 (86 aa).

This sequence belongs to the universal ribosomal protein uS17 family. Part of the 30S ribosomal subunit.

Its function is as follows. One of the primary rRNA binding proteins, it binds specifically to the 5'-end of 16S ribosomal RNA. This Streptococcus pyogenes serotype M6 (strain ATCC BAA-946 / MGAS10394) protein is Small ribosomal subunit protein uS17.